A 578-amino-acid polypeptide reads, in one-letter code: Arginine--tRNA ligase (578 aa).

A 'HIGH' region motif is present at residues 125–135 (PNVAKKMHVGH).

The protein belongs to the class-I aminoacyl-tRNA synthetase family. In terms of assembly, monomer.

The protein localises to the cytoplasm. It catalyses the reaction tRNA(Arg) + L-arginine + ATP = L-arginyl-tRNA(Arg) + AMP + diphosphate. This chain is Arginine--tRNA ligase, found in Buchnera aphidicola subsp. Baizongia pistaciae (strain Bp).